The primary structure comprises 273 residues: Bifunctional protein FolD (273 aa).

Residues Gly-155 to Ser-157, Ser-182, and Ile-223 contribute to the NADP(+) site.

The protein belongs to the tetrahydrofolate dehydrogenase/cyclohydrolase family. Homodimer.

It carries out the reaction (6R)-5,10-methylene-5,6,7,8-tetrahydrofolate + NADP(+) = (6R)-5,10-methenyltetrahydrofolate + NADPH. The enzyme catalyses (6R)-5,10-methenyltetrahydrofolate + H2O = (6R)-10-formyltetrahydrofolate + H(+). It participates in one-carbon metabolism; tetrahydrofolate interconversion. In terms of biological role, catalyzes the oxidation of 5,10-methylenetetrahydrofolate to 5,10-methenyltetrahydrofolate and then the hydrolysis of 5,10-methenyltetrahydrofolate to 10-formyltetrahydrofolate. The chain is Bifunctional protein FolD from Pseudothermotoga lettingae (strain ATCC BAA-301 / DSM 14385 / NBRC 107922 / TMO) (Thermotoga lettingae).